We begin with the raw amino-acid sequence, 208 residues long: Histone H1.3 (208 aa).

Ser2 carries the N-acetylserine modification. The region spanning 37-113 (AHPPYINMVT…GASGRFRVTE (77 aa)) is the H15 domain. Positions 113–208 (EKKAAAAKKP…PAKKAVAPKT (96 aa)) are disordered. Basic residues-rich tracts occupy residues 148–158 (KAKKTTATKTK) and 165–191 (KKVK…KSAP). Residues 192–208 (KKAAAAKPAKKAVAPKT) are compositionally biased toward low complexity.

This sequence belongs to the histone H1/H5 family.

The protein localises to the nucleus. It is found in the chromosome. In terms of biological role, histones H1 are necessary for the condensation of nucleosome chains into higher-order structures. This is Histone H1.3 (hil-3) from Caenorhabditis elegans.